We begin with the raw amino-acid sequence, 286 residues long: NADP-dependent dehydrogenase clz5 (286 aa).

NADP(+) contacts are provided by Ser-49, Leu-51, Asp-93, Tyr-207, Lys-211, Ile-241, and Gln-245. The active-site Proton acceptor is Tyr-207. Catalysis depends on Tyr-207, which acts as the Proton donor. The active-site Lowers pKa of active site Tyr is Lys-211.

It belongs to the short-chain dehydrogenases/reductases (SDR) family. In terms of assembly, homodimer.

The protein resides in the cytoplasm. The protein localises to the cytosol. Its pathway is secondary metabolite biosynthesis. Functionally, NADP-dependent dehydrogenase; part of the gene cluster that mediates the biosynthesis of squalestatin S1 (SQS1, also known as zaragozic acid A), a heavily oxidized fungal polyketide that offers potent cholesterol lowering activity by targeting squalene synthase (SS). SQS1 is composed of a 2,8-dioxobicyclic[3.2.1]octane-3,4,5-tricarboxyclic acid core that is connected to two lipophilic polyketide arms. These initial steps feature the priming of an unusual benzoic acid starter unit onto the highly reducing polyketide synthase clz14, followed by oxaloacetate extension and product release to generate a tricarboxylic acid containing product. The phenylalanine ammonia lyase (PAL) clz10 and the acyl-CoA ligase clz12 are involved in transforming phenylalanine into benzoyl-CoA. The citrate synthase-like protein clz17 is involved in connecting the C-alpha-carbons of the hexaketide chain and oxaloacetate to afford the tricarboxylic acid unit. The potential hydrolytic enzymes, clz11 and clz13, are in close proximity to pks2 and may participate in product release. On the other side, the tetraketide arm is synthesized by a the squalestatin tetraketide synthase clz2 and enzymatically esterified to the core in the last biosynthetic step, by the acetyltransferase clz6. The biosynthesis of the tetraketide must involve 3 rounds of chain extension. After the first and second rounds methyl-transfer occurs, and in all rounds of extension the ketoreductase and dehydratase are active. The enoyl reductase and C-MeT of clz2 are not active in the final round of extension. The acetyltransferase clz6 appears to have a broad substrate selectivity for its acyl CoA substrate, allowing the in vitro synthesis of novel squalestatins. The biosynthesis of SQS1 requires several oxidative steps likely performed by oxidoreductases clz3, clz15 and clz16. Finally, in support of the identification of the cluster as being responsible for SQS1 production, the cluster contains a gene encoding a putative squalene synthase (SS) clz20, suggesting a likely mechanism for self-resistance. This chain is NADP-dependent dehydrogenase clz5, found in Cochliobolus lunatus (Filamentous fungus).